Consider the following 324-residue polypeptide: Glyoxylate/hydroxypyruvate reductase B (324 aa).

Active-site residues include arginine 237 and glutamate 266. The active-site Proton donor is the histidine 285.

It belongs to the D-isomer specific 2-hydroxyacid dehydrogenase family. GhrB subfamily. As to quaternary structure, homodimer.

It is found in the cytoplasm. The enzyme catalyses glycolate + NADP(+) = glyoxylate + NADPH + H(+). The catalysed reaction is (R)-glycerate + NAD(+) = 3-hydroxypyruvate + NADH + H(+). It carries out the reaction (R)-glycerate + NADP(+) = 3-hydroxypyruvate + NADPH + H(+). Functionally, catalyzes the NADPH-dependent reduction of glyoxylate and hydroxypyruvate into glycolate and glycerate, respectively. This is Glyoxylate/hydroxypyruvate reductase B from Salmonella heidelberg (strain SL476).